A 446-amino-acid chain; its full sequence is Minor fimbrium tip subunit Mfa3 (446 aa).

Positions 1-20 (MMQLKKRYFALILLLFLWSG) are cleaved as a signal peptide. The N-palmitoyl cysteine moiety is linked to residue Cys-21. A lipid anchor (S-diacylglycerol cysteine) is attached at Cys-21. A propeptide spanning residues 21–43 (CDRGVDPQPDPLQPDVYLLVNAR) is cleaved from the precursor.

This sequence belongs to the bacteroidetes fimbrillin superfamily. FimB/Mfa2 family. As to quaternary structure, component of the fimbrium tip. Minor fimbriae are composed of a structural subunit, most often Mfa1, and the accessory subunits Mfa3, Mfa4 and Mfa5. Fimbrium assembly occurs by linear, head-to-tail oligomerization of fimbrial subunits. This is mediated via insertion of a C-terminal beta-strand from one subunit into a groove in the N-terminal domain of the following subunit. Mfa3 is required for Mfa4 and Mfa5 insertion into the fimbrium.

The protein resides in the fimbrium. It is found in the cell outer membrane. In terms of biological role, tip subunit of the minor fimbriae. These filamentous pili are attached to the cell surface; they mediate biofilm formation, adhesion onto host cells and onto other bacteria that are part of the oral microbiome. They play an important role in invasion of periodontal tissues and are recognized as major virulence factors. Fimbrium subunits from different strains have highly divergent sequences, and this correlates with pathogenicity. The polypeptide is Minor fimbrium tip subunit Mfa3 (mfa3) (Porphyromonas gingivalis (strain ATCC 33277 / DSM 20709 / CIP 103683 / JCM 12257 / NCTC 11834 / 2561)).